The sequence spans 679 residues: Stress-70 protein, mitochondrial (679 aa).

The N-terminal 46 residues, 1 to 46, are a transit peptide targeting the mitochondrion; sequence MISASRAAVSRFVGTAASRGPTAARHQDGWNGLSHEAFRIVSRRDY. Positions 1–432 are interaction with NFS1; that stretch reads MISASRAAVS…IQGGVLAGDV (432 aa). ADP contacts are provided by T63 and N64. A nucleotide-binding domain (NBD) region spans residues 63 to 431; it reads TNSCVAVMEG…AIQGGVLAGD (369 aa). Residue K76 is modified to N6-acetyllysine. T87 is subject to Phosphothreonine. Residues K135 and K138 each carry the N6-acetyllysine; alternate modification. N6-succinyllysine; alternate is present on residues K135 and K138. K143 carries the post-translational modification N6-acetyllysine. An N6-acetyllysine; alternate modification is found at K206. K206 bears the N6-succinyllysine; alternate mark. An N6-malonyllysine; alternate modification is found at K206. K234 and K288 each carry N6-acetyllysine. Residue K300 is modified to N6-acetyllysine; alternate. K300 carries the N6-succinyllysine; alternate modification. ADP-binding residues include E313, K316, and S320. Residue K368 is modified to N6-succinyllysine. ADP is bound by residues G388 and R391. K394 is modified (N6-succinyllysine). S408 carries the post-translational modification Phosphoserine. The segment at 432 to 441 is interdomain linker; it reads VTDVLLLDVT. The tract at residues 432 to 679 is interaction with FXN and ISCU; sequence VTDVLLLDVT…QKDNQKEEKQ (248 aa). Positions 442 to 679 are substrate-binding domain (SBD); that stretch reads PLSLGIETLG…QKDNQKEEKQ (238 aa). R513 is modified (omega-N-methylarginine). K567 and K600 each carry N6-acetyllysine; alternate. An N6-succinyllysine; alternate mark is found at K567 and K600. The residue at position 610 (K610) is an N6-succinyllysine. Position 612 is an N6-acetyllysine (K612). The residue at position 646 (K646) is an N6-acetyllysine; alternate. Residue K646 is modified to N6-succinyllysine; alternate. The disordered stretch occupies residues 656–679; that stretch reads ASEREGSGSSGTGEQKDNQKEEKQ. The span at 669 to 679 shows a compositional bias: basic and acidic residues; it reads EQKDNQKEEKQ.

Belongs to the heat shock protein 70 family. As to quaternary structure, interacts strongly with the intermediate form of FXN and weakly with its mature form. Interacts with HSCB. Associates with the mitochondrial contact site and cristae organizing system (MICOS) complex, composed of at least MICOS10/MIC10, CHCHD3/MIC19, CHCHD6/MIC25, APOOL/MIC27, IMMT/MIC60, APOO/MIC23/MIC26 and QIL1/MIC13. This complex was also known under the names MINOS or MitOS complex. The MICOS complex associates with mitochondrial outer membrane proteins SAMM50, MTX1, MTX2 and DNAJC11, mitochondrial inner membrane protein TMEM11 and with HSPA9. Interacts with DNLZ, the interaction is required to prevent self-aggregation. Interacts with TESPA1. Interacts with PDPN. Interacts with NFU1, NFS1 and ISCU. Interacts with TP53; the interaction promotes TP53 degradation. Interacts (via SBD domain) with UBXN2A; the interaction with UBXN2A inhibits HSPA9/MOT-2 interaction with and degradation of TP53, thereby promotes TP53 translocation to the nucleus. Interacts with ITPR1 AND VDAC1; this interaction couples ITPR1 to VDAC1. Component of the TIM23 mitochondrial inner membrane pre-sequence translocase complex.

It is found in the mitochondrion. The protein resides in the nucleus. It localises to the nucleolus. Its subcellular location is the cytoplasm. The protein localises to the mitochondrion matrix. It carries out the reaction ATP + H2O = ADP + phosphate + H(+). Its activity is regulated as follows. The chaperone activity is regulated by ATP-induced allosteric coupling of the nucleotide-binding (NBD) and substrate-binding (SBD) domains. ATP binding in the NBD leads to a conformational change in the NBD, which is transferred through the interdomain linker (IDL) to the substrate-binding domain (SBD). This elicits a reduced substrate affinity and a faster substrate exchange rate. Upon hydrolysis of ATP to ADP, the protein undergoes a conformational change that increases its affinity for substrate proteins. It cycles through repeated phases of ATP hydrolysis and nucleotide exchange, facilitating repeated cycles of substrate binding and release. Functions in collaboration with co-chaperones. Functions with the co-chaperone, DNLZ, to maintain solubility and regulate ATP hydrolysis. Nucleotide exchange factors, GRPEL1 and GRPEL2, accelerate nucleotide exchange. In terms of biological role, mitochondrial chaperone that plays a key role in mitochondrial protein import, folding, and assembly. Plays an essential role in the protein quality control system, the correct folding of proteins, the re-folding of misfolded proteins, and the targeting of proteins for subsequent degradation. These processes are achieved through cycles of ATP binding, ATP hydrolysis, and ADP release, mediated by co-chaperones. In mitochondria, it associates with the TIM (translocase of the inner membrane) protein complex to assist in the import and folding of mitochondrial proteins. Plays an important role in mitochondrial iron-sulfur cluster (ISC) biogenesis, interacts with and stabilizes ISC cluster assembly proteins FXN, NFU1, NFS1 and ISCU. Regulates erythropoiesis via stabilization of ISC assembly. Regulates mitochondrial calcium-dependent apoptosis by coupling two calcium channels, ITPR1 and VDAC1, at the mitochondria-associated endoplasmic reticulum (ER) membrane to facilitate calcium transport from the ER lumen to the mitochondria intermembrane space, providing calcium for the downstream calcium channel MCU, which releases it into the mitochondrial matrix. Although primarily located in the mitochondria, it is also found in other cellular compartments. In the cytosol, it associates with proteins involved in signaling, apoptosis, or senescence. It may play a role in cell cycle regulation via its interaction with and promotion of degradation of TP53. May play a role in the control of cell proliferation and cellular aging. Protects against reactive oxygen species (ROS). Extracellular HSPA9 plays a cytoprotective role by preventing cell lysis following immune attack by the membrane attack complex by disrupting formation of the complex. The polypeptide is Stress-70 protein, mitochondrial (Bos taurus (Bovine)).